The sequence spans 154 residues: MATLEQKLTVLISDTIESMGYELVGVECQHAGRFLTVRLYIDKEGGVTIDDCSDVSRQVSAIFDVEDPISDKYNLEVSSPGLDRPLFTLAHYARFVGREMVIHLRIPMFDRRKWQGKLTKVDGDLISLEIENNGEHQFIFSNIQKANLIPVFDF.

This sequence belongs to the RimP family.

The protein resides in the cytoplasm. Required for maturation of 30S ribosomal subunits. The sequence is that of Ribosome maturation factor RimP from Haemophilus ducreyi (strain 35000HP / ATCC 700724).